The chain runs to 258 residues: 14-3-3 protein homolog (258 aa).

It belongs to the 14-3-3 family.

This is 14-3-3 protein homolog from Encephalitozoon cuniculi (strain GB-M1) (Microsporidian parasite).